The primary structure comprises 861 residues: Xylan 1,4-beta-xylosidase (861 aa).

Positions 1–19 are cleaved as a signal peptide; that stretch reads MKYQLFLSLALCVGLGASA. The active-site Nucleophile is Asp-269. The region spanning 458–600 is the PA14 domain; the sequence is DGKKGLKGTF…DYQETIAQLK (143 aa). Glu-616 acts as the Proton donor/acceptor in catalysis.

Belongs to the glycosyl hydrolase 3 family. In terms of assembly, exists as a large polymeric species, presumably as a homononamer.

The catalysed reaction is Hydrolysis of (1-&gt;4)-beta-D-xylans, to remove successive D-xylose residues from the non-reducing termini.. It catalyses the reaction Hydrolysis of terminal non-reducing alpha-L-arabinofuranoside residues in alpha-L-arabinosides.. The protein operates within glycan degradation; xylan degradation. Its function is as follows. Involved in degradation of plant cell wall polysaccharides. Has beta-xylosidase activity via its capacity to hydrolyze glycosidic linkages of beta-1,4-xylo-oligosaccharides of various lengths (X2 to X6), releasing xylose monomers. To a much lesser extent, also has alpha-L-arabinofuranosidase activity. Does not possess beta-D-glucosidase activity. Acts synergistically with Xyn10D-Fae1A to increase the release of xylose from xylan. The polypeptide is Xylan 1,4-beta-xylosidase (Xylanibacter ruminicola (strain ATCC 19189 / DSM 19721 / CIP 105475 / JCM 8958 / 23) (Prevotella ruminicola)).